The primary structure comprises 300 residues: Putative heme-binding peroxidase (300 aa).

Catalysis depends on H39, which acts as the Proton acceptor. Disordered stretches follow at residues 44-64 (YDKS…EAEG) and 116-135 (GRTD…LPDA). The span at 116-126 (GRTDFADDSRV) shows a compositional bias: basic and acidic residues. H163 is a binding site for heme b. Residue W179 is the Tryptophan radical intermediate of the active site.

The protein belongs to the peroxidase family. Cytochrome c peroxidase subfamily. It depends on heme b as a cofactor.

Destroys radicals which are normally produced within the cells and which are toxic to biological systems. This is Putative heme-binding peroxidase from Pyricularia oryzae (strain 70-15 / ATCC MYA-4617 / FGSC 8958) (Rice blast fungus).